The following is a 496-amino-acid chain: Angiopoietin-2 (496 aa).

The signal sequence occupies residues 1 to 18; sequence MWQIVFLTFGCDLVLASA. N89, N119, N133, N151, N240, and N304 each carry an N-linked (GlcNAc...) asparagine glycan. Residues 159-256 are a coiled coil; that stretch reads QLLQHSISTN…QQHDLMETVN (98 aa). The 217-residue stretch at 280–496 folds into the Fibrinogen C-terminal domain; it reads TFRDCAEIFK…TTMMIRPADF (217 aa). An intrachain disulfide couples C284 to C313. Positions 429, 431, 433, and 435 each coordinate Ca(2+). 2 cysteine pairs are disulfide-bonded: C433/C435 and C437/C450.

As to quaternary structure, interacts with TEK/TIE2, competing for the same binding site as ANGPT1. Interacts with ITGA5. Interacts with SVEP1/polydom. Interacts with THBD; this interaction significantly inhibits the generation of activated PC and TAFIa/CPB2 by the thrombin/thrombomodulin complex.

The protein resides in the secreted. Its function is as follows. Binds to TEK/TIE2, competing for the ANGPT1 binding site, and modulating ANGPT1 signaling. Can induce tyrosine phosphorylation of TEK/TIE2 in the absence of ANGPT1. In the absence of angiogenic inducers, such as VEGF, ANGPT2-mediated loosening of cell-matrix contacts may induce endothelial cell apoptosis with consequent vascular regression. In concert with VEGF, it may facilitate endothelial cell migration and proliferation, thus serving as a permissive angiogenic signal. Involved in the regulation of lymphangiogenesis. This is Angiopoietin-2 (Angpt2) from Rattus norvegicus (Rat).